Consider the following 431-residue polypeptide: Enolase (431 aa).

Residue Q163 coordinates (2R)-2-phosphoglycerate. E205 (proton donor) is an active-site residue. Mg(2+)-binding residues include D242, E288, and D315. Residues K340, R369, S370, and K391 each contribute to the (2R)-2-phosphoglycerate site. K340 (proton acceptor) is an active-site residue.

Belongs to the enolase family. Mg(2+) serves as cofactor.

It localises to the cytoplasm. The protein resides in the secreted. Its subcellular location is the cell surface. The enzyme catalyses (2R)-2-phosphoglycerate = phosphoenolpyruvate + H2O. The protein operates within carbohydrate degradation; glycolysis; pyruvate from D-glyceraldehyde 3-phosphate: step 4/5. Its function is as follows. Catalyzes the reversible conversion of 2-phosphoglycerate (2-PG) into phosphoenolpyruvate (PEP). It is essential for the degradation of carbohydrates via glycolysis. The protein is Enolase of Latilactobacillus sakei subsp. sakei (strain 23K) (Lactobacillus sakei subsp. sakei).